Consider the following 317-residue polypeptide: ADIPOR-like receptor IZH2 (317 aa).

Topologically, residues 1-78 are cytoplasmic; that stretch reads MSTLLERTKS…TFKSLFYLHN (78 aa). A helical transmembrane segment spans residues 79 to 99; the sequence is ESVNIYSHLIPALGFFTVLLL. Residues 100 to 110 are Extracellular-facing; it reads DKSTIKVFATT. Residues 111 to 131 form a helical membrane-spanning segment; it reads TWLDHMVIDLFYSGAFACLIL. Residues 132-153 lie on the Cytoplasmic side of the membrane; sequence SSSFHCLKSHSLRIATLGNKLD. A helical membrane pass occupies residues 154 to 174; sequence YLGICILIVTSMVSILYYGYF. Residues 175-176 lie on the Extracellular side of the membrane; that stretch reads EK. Residues 177 to 197 traverse the membrane as a helical segment; the sequence is FSLFCLFALITVSFGIACSIV. Topologically, residues 198–212 are cytoplasmic; the sequence is SLKDKFRKREWRPYR. The chain crosses the membrane as a helical span at residues 213 to 233; the sequence is AGLFVCFGLSSIIPIFSGLYC. Topologically, residues 234–242 are extracellular; that stretch reads YSFSEIWTQ. Residues 243-263 traverse the membrane as a helical segment; the sequence is IQLFWVLLGGVLYIIGAVLYG. The Cytoplasmic segment spans residues 264 to 276; sequence MRFPEKICPGKFD. The chain crosses the membrane as a helical span at residues 277-297; it reads IWGHSHQLFHFLVVIAALCHL. Residues 298–317 lie on the Extracellular side of the membrane; the sequence is RGLLNSYELVHIKMENGIVS.

The protein belongs to the ADIPOR family.

It localises to the membrane. Its function is as follows. Probable receptor, which is involved in metabolic pathways that regulate lipid metabolism such as fatty acid oxidation. This is ADIPOR-like receptor IZH2 (IZH2) from Saccharomyces cerevisiae (strain ATCC 204508 / S288c) (Baker's yeast).